The primary structure comprises 540 residues: Glucose-6-phosphate isomerase (540 aa).

Glu346 (proton donor) is an active-site residue. Active-site residues include His377 and Lys505.

It belongs to the GPI family.

Its subcellular location is the cytoplasm. The catalysed reaction is alpha-D-glucose 6-phosphate = beta-D-fructose 6-phosphate. The protein operates within carbohydrate biosynthesis; gluconeogenesis. It functions in the pathway carbohydrate degradation; glycolysis; D-glyceraldehyde 3-phosphate and glycerone phosphate from D-glucose: step 2/4. Its function is as follows. Catalyzes the reversible isomerization of glucose-6-phosphate to fructose-6-phosphate. The polypeptide is Glucose-6-phosphate isomerase (Francisella tularensis subsp. tularensis (strain SCHU S4 / Schu 4)).